We begin with the raw amino-acid sequence, 188 residues long: Putative manganese efflux pump MntP (188 aa).

6 consecutive transmembrane segments (helical) span residues Leu3–Gly23, Leu41–Ala61, Ser62–Gly82, Leu107–Leu129, Ala143–Gly163, and Ile168–Gly188.

This sequence belongs to the MntP (TC 9.B.29) family.

The protein localises to the cell inner membrane. Probably functions as a manganese efflux pump. This Klebsiella pneumoniae (strain 342) protein is Putative manganese efflux pump MntP.